The sequence spans 499 residues: Neuronal acetylcholine receptor subunit alpha-7 (499 aa).

Residues 1 to 19 form the signal peptide; it reads MRGSLCLALAASILHVSLQ. Over 20 to 230 the chain is Extracellular; sequence GEFQRKLYKD…VSIRRRTLYY (211 aa). Ca(2+) is bound by residues Arg39 and Val41. N-linked (GlcNAc...) asparagine glycosylation is found at Asn43, Asn87, and Asn130. Residues Cys147 and Cys161 are joined by a disulfide bond. 2 residues coordinate Ca(2+): Ser169 and Tyr207. Residues Cys209 and Cys210 are joined by a disulfide bond. The next 3 helical transmembrane spans lie at 231 to 251, 259 to 279, and 292 to 312; these read GLNL…VFLL, ISLG…VAEI, and QYFA…VIVL. Residues 257–264 are essential for TMEM35A/NACHO-mediated proper subunit assembly and trafficking to cell membrane; the sequence is EKISLGIT. Over 313–466 the chain is Cytoplasmic; that stretch reads QYHHHDPDGG…WKFAACVVDR (154 aa). Residues 467-487 form a helical membrane-spanning segment; sequence LCLMAFSVFTILCTIGILMSA.

It belongs to the ligand-gated ion channel (TC 1.A.9) family. Acetylcholine receptor (TC 1.A.9.1) subfamily. Alpha-7/CHRNA7 sub-subfamily. Homopentamer. Homooligomer of the short form gives rise to unfunctional channels, as does coexpression of both long and short forms of the receptor. Can also form heteropentamers with CHRNB2, mainly found in basal forebrain cholinergic neurons. Interacts with RIC3; which is required for proper folding and assembly. Interacts with LYPD6. Interacts with CANX. In terms of processing, glycosylations at Asn-43, Asn-87 and Asn-130 are essential for TMEM35A/NACHO-mediated proper subunit assembly and trafficking to the cell membrane. As to expression, at least in chromaffin cells.

It localises to the postsynaptic cell membrane. The protein resides in the cell membrane. It carries out the reaction Ca(2+)(in) = Ca(2+)(out). The enzyme catalyses K(+)(in) = K(+)(out). The catalysed reaction is Na(+)(in) = Na(+)(out). It catalyses the reaction choline(out) = choline(in). It carries out the reaction NH4(+)(in) = NH4(+)(out). The enzyme catalyses L-arginine(in) = L-arginine(out). The catalysed reaction is guanidine(out) = guanidine(in). With respect to regulation, activated by a myriad of ligands such as acetylcholine, cytisine, nicotine, choline and epibatidine. Oligomeric amyloid-beta protein 42 activates specifially CHRNA7:CHRNB2 nAchRs. Activity is modulated by positive allosteric modulators (PAMs), such as flavonoids, with a wide range of chemical diversity, pharmacological sensitivity and efficacy. AChR activity is inhibited by the antagonists alpha-conotoxons RgIA, ImI and ImII, small disulfide-constrained peptides from cone snails. Alpha-conotoxin PnIC selectively inhibits CHRNA7:CHRNB2 over CHRNA7 homopentamer. Its function is as follows. Component of neuronal acetylcholine receptors (nAChRs) that function as pentameric, ligand-gated cation channels with high calcium permeability among other activities. nAChRs are excitatory neurotrasnmitter receptors formed by a collection of nAChR subunits known to mediate synaptic transmission in the nervous system and the neuromuscular junction. Each nAchR subunit confers differential attributes to channel properties, including activation, deactivation and desensitization kinetics, pH sensitivity, cation permeability, and binding to allosteric modulators. CHRNA7 forms homopentameric neuronal acetylcholine receptors abundantly expressed in the central nervous system, characterized by fast desensitization and high calcium permeability. Also forms heteropentamers with CHRNB2, mainly expressed in basal forebrain cholinergic neurons. Involved in the modulation of calcium-dependent signaling pathways and influences the release of neurotransmitters, including dopamine, glutamate and GABA. Also expressed in non-neuronal cells such as immune cells like lymphocytes, monocytes and macrophages. In T cells, activation induces metabotropic signaling that results in an increase of intracellular Ca2+ concentrations, independent of ionotropic receptor functions. In macrophages, required for acetylcholine-mediated inhibition of TNF and other inflammatory cytokine release. Once activated by acetylcholine, nicotine or other agonists, selectively inhibits production of pro-inflammatory cytokines while leaving anti-inflammatory cytokines undisturbed. Stimulates the cholinergic anti-inflammatory pathway, controlling inflammation by inhibiting NFKB nuclear translocation and activating the JAK2-STAT3 pathway, independently of ion channel activity. Also expressed in the urothelium where it modulates reflex bladder activity by increasing intracellular calcium through internal stores and decreasing basal ATP release. The sequence is that of Neuronal acetylcholine receptor subunit alpha-7 (CHRNA7) from Bos taurus (Bovine).